The following is a 159-amino-acid chain: uncharacterized protein (159 aa).

2 helical membrane-spanning segments follow: residues alanine 17–valine 37 and leucine 40–tyrosine 60.

Its subcellular location is the cell membrane. This is an uncharacterized protein from Borreliella burgdorferi (strain ATCC 35210 / DSM 4680 / CIP 102532 / B31) (Borrelia burgdorferi).